The sequence spans 699 residues: Elongation factor G (699 aa).

The tr-type G domain occupies 8 to 288; it reads EDYRNFGIMA…AVVDYLPSPL (281 aa). GTP is bound by residues 17–24, 86–90, and 140–143; these read AHIDAGKT, DTPGH, and NKMD.

This sequence belongs to the TRAFAC class translation factor GTPase superfamily. Classic translation factor GTPase family. EF-G/EF-2 subfamily.

It localises to the cytoplasm. Its function is as follows. Catalyzes the GTP-dependent ribosomal translocation step during translation elongation. During this step, the ribosome changes from the pre-translocational (PRE) to the post-translocational (POST) state as the newly formed A-site-bound peptidyl-tRNA and P-site-bound deacylated tRNA move to the P and E sites, respectively. Catalyzes the coordinated movement of the two tRNA molecules, the mRNA and conformational changes in the ribosome. The protein is Elongation factor G of Rhizobium etli (strain CIAT 652).